A 520-amino-acid chain; its full sequence is Cytochrome P450 4F8 (520 aa).

The chain crosses the membrane as a helical span at residues 15-37; that stretch reads AASPWLLLLVVGASWLLARILAW. Position 468 (C468) interacts with heme.

The protein belongs to the cytochrome P450 family. Heme is required as a cofactor. In terms of tissue distribution, expressed in the epithelium of seminal vesicles, in renal cortex, in adult and fetal liver, in epidermis, in corneal epithelium, in sweat glands, hair follicles, epithelial linings of the ampulla of vas deferens and of the stomach and small intestine, as well as in the transitional epithelium of the bladder and ureter (at protein level). In the epidermis, expressed from the basal cell to the granular cell layers. In the corneal epithelium, expressed in all cell layers. Also detected in prostate. Up-regulated in the epidermis of psoriatic lesions.

The protein resides in the endoplasmic reticulum membrane. Its subcellular location is the microsome membrane. It catalyses the reaction an organic molecule + reduced [NADPH--hemoprotein reductase] + O2 = an alcohol + oxidized [NADPH--hemoprotein reductase] + H2O + H(+). It carries out the reaction (5Z,8Z,11Z,14Z)-eicosatetraenoate + reduced [NADPH--hemoprotein reductase] + O2 = (18R)-hydroxy-(5Z,8Z,11Z,14Z)-eicosatetraenoate + oxidized [NADPH--hemoprotein reductase] + H2O + H(+). The catalysed reaction is (4Z,7Z,10Z,13Z,16Z)-docosapentaenoate + reduced [NADPH--hemoprotein reductase] + O2 = 20-hydroxy-(4Z,7Z,10Z,13Z,16Z)-docosapentaenoate + oxidized [NADPH--hemoprotein reductase] + H2O + H(+). The enzyme catalyses prostaglandin H1 + reduced [NADPH--hemoprotein reductase] + O2 = 19-hydroxyprostaglandin H1 + oxidized [NADPH--hemoprotein reductase] + H2O + H(+). It catalyses the reaction prostaglandin H2 + reduced [NADPH--hemoprotein reductase] + O2 = 19-hydroxyprostaglandin H2 + oxidized [NADPH--hemoprotein reductase] + H2O + H(+). It carries out the reaction prostaglandin I2 + reduced [NADPH--hemoprotein reductase] + O2 = 19-hydroxy-prostaglandin I2 + oxidized [NADPH--hemoprotein reductase] + H2O + H(+). The catalysed reaction is (4Z,7Z,10Z,13Z,16Z,19Z)-docosahexaenoate + reduced [NADPH--hemoprotein reductase] + O2 = 10,11-epoxy-(4Z,7Z,13Z,16Z,19Z)-docosapentaenoate + oxidized [NADPH--hemoprotein reductase] + H2O + H(+). The enzyme catalyses (4Z,7Z,10Z,13Z,16Z,19Z)-docosahexaenoate + reduced [NADPH--hemoprotein reductase] + O2 = 13,14-epoxy-(4Z,7Z,10Z,16Z,19Z)-docosapentaenoate + oxidized [NADPH--hemoprotein reductase] + H2O + H(+). It catalyses the reaction (4Z,7Z,10Z,13Z,16Z,19Z)-docosahexaenoate + reduced [NADPH--hemoprotein reductase] + O2 = 16,17-epoxy-(4Z,7Z,10Z,13Z,19Z)-docosapentaenoate + oxidized [NADPH--hemoprotein reductase] + H2O + H(+). It carries out the reaction (4Z,7Z,10Z,13Z,16Z,19Z)-docosahexaenoate + reduced [NADPH--hemoprotein reductase] + O2 = 19,20-epoxy-(4Z,7Z,10Z,13Z,16Z)-docosapentaenoate + oxidized [NADPH--hemoprotein reductase] + H2O + H(+). The catalysed reaction is (7Z,10Z,13Z,16Z,19Z)-docosapentaenoate + reduced [NADPH--hemoprotein reductase] + O2 = 10,11-epoxy-(7Z,13Z,16Z,19Z)-docosatetraenoate + oxidized [NADPH--hemoprotein reductase] + H2O + H(+). The enzyme catalyses (7Z,10Z,13Z,16Z,19Z)-docosapentaenoate + reduced [NADPH--hemoprotein reductase] + O2 = 13,14-epoxy-(7Z,10Z,16Z,19Z)-docosatetraenoate + oxidized [NADPH--hemoprotein reductase] + H2O + H(+). It catalyses the reaction (7Z,10Z,13Z,16Z,19Z)-docosapentaenoate + reduced [NADPH--hemoprotein reductase] + O2 = 16,17-epoxy-(7Z,10Z,13Z,19Z)-docosatetraenoate + oxidized [NADPH--hemoprotein reductase] + H2O + H(+). It carries out the reaction (7Z,10Z,13Z,16Z,19Z)-docosapentaenoate + reduced [NADPH--hemoprotein reductase] + O2 = 19,20-epoxy-(7Z,10Z,13Z,16Z)-docosatetraenoate + oxidized [NADPH--hemoprotein reductase] + H2O + H(+). It functions in the pathway lipid metabolism; fatty acid metabolism. Functionally, a cytochrome P450 monooxygenase involved in the metabolism of endogenous polyunsaturated fatty acids (PUFAs) and their oxygenated derivatives (oxylipins). Mechanistically, uses molecular oxygen inserting one oxygen atom into a substrate, and reducing the second into a water molecule, with two electrons provided by NADPH via cytochrome P450 reductase (CPR; NADPH-ferrihemoprotein reductase). Catalyzes the hydroxylation of carbon hydrogen bonds, with preference for omega-1 and omega-2 positions. Hydroxylates (5Z,8Z,11Z,14Z)-eicosatetraenoic acid (arachidonate) predominantly at omega-2 position to form (18R)-hydroxyeicosatetraenoic acid (18R-HETE). Exhibits omega-1 hydroxylase activity toward prostaglandin (PG) H1, PGH2 and PGI2. Catalyzes the epoxidation of double bonds of PUFAs, including docosahexaenoic and docosapentaenoic acids. Shows little activity against PGD2, PGE1, PGE2, PGF2alpha, and leukotriene B4. The protein is Cytochrome P450 4F8 of Homo sapiens (Human).